The chain runs to 89 residues: UPF0335 protein Nwi_0989 (89 aa).

The protein belongs to the UPF0335 family.

This is UPF0335 protein Nwi_0989 from Nitrobacter winogradskyi (strain ATCC 25391 / DSM 10237 / CIP 104748 / NCIMB 11846 / Nb-255).